A 287-amino-acid polypeptide reads, in one-letter code: Small ribosomal subunit biogenesis GTPase RsgA (287 aa).

A CP-type G domain is found at 63 to 223 (KNLLIRPKVA…VIDTPGFGSL (161 aa)). GTP is bound by residues 113 to 116 (SKMD) and 166 to 174 (GQSGVGKST). Residues Cys-246, Cys-251, His-253, and Cys-259 each contribute to the Zn(2+) site.

It belongs to the TRAFAC class YlqF/YawG GTPase family. RsgA subfamily. As to quaternary structure, monomer. Associates with 30S ribosomal subunit, binds 16S rRNA. Requires Zn(2+) as cofactor.

The protein resides in the cytoplasm. Functionally, one of several proteins that assist in the late maturation steps of the functional core of the 30S ribosomal subunit. Helps release RbfA from mature subunits. May play a role in the assembly of ribosomal proteins into the subunit. Circularly permuted GTPase that catalyzes slow GTP hydrolysis, GTPase activity is stimulated by the 30S ribosomal subunit. The chain is Small ribosomal subunit biogenesis GTPase RsgA from Malacoplasma penetrans (strain HF-2) (Mycoplasma penetrans).